We begin with the raw amino-acid sequence, 696 residues long: DNA-directed RNA polymerase subunit beta' (696 aa).

The Zn(2+) site is built by Cys-69, Cys-71, Cys-87, and Cys-90. Mg(2+) contacts are provided by Asp-504, Asp-506, and Asp-508.

The protein belongs to the RNA polymerase beta' chain family. RpoC1 subfamily. As to quaternary structure, in plastids the minimal PEP RNA polymerase catalytic core is composed of four subunits: alpha, beta, beta', and beta''. When a (nuclear-encoded) sigma factor is associated with the core the holoenzyme is formed, which can initiate transcription. It depends on Mg(2+) as a cofactor. Zn(2+) is required as a cofactor.

It is found in the plastid. It localises to the chloroplast. The catalysed reaction is RNA(n) + a ribonucleoside 5'-triphosphate = RNA(n+1) + diphosphate. DNA-dependent RNA polymerase catalyzes the transcription of DNA into RNA using the four ribonucleoside triphosphates as substrates. This Pinus thunbergii (Japanese black pine) protein is DNA-directed RNA polymerase subunit beta'.